Consider the following 311-residue polypeptide: MALPIIIDCDPGHDDAIALVLSLASPELEVKAITSSAGNQTPEKTLRNVLRMLTLLKRPDIPVAGGAVKPLMRELIIADNVHGESGLDGPALPEPSFAPQSGTAVELMAKTLRESSQPVTIVSTGPQTNVALLLNSHPELHTKIARIVIMGGAMGLGNWTPAAEFNIYVDPEAAEIVFQSGIPVVMAGLDVTHKAQIHAADIERFRAIGNPISTIVAELLDFFMEYHKDEKWGFVGAPLHDPCTIAWLLKPEIFTTVERWVGVETQGKYTQGMTVVDYYFLTGNKPNATVMVDVDRQGFVDLLAERLQYYA.

Residue His240 is part of the active site.

It belongs to the IUNH family. RihA subfamily.

Its function is as follows. Hydrolyzes cytidine or uridine to ribose and cytosine or uracil, respectively. The protein is Pyrimidine-specific ribonucleoside hydrolase RihA of Salmonella dublin (strain CT_02021853).